Here is a 269-residue protein sequence, read N- to C-terminus: Interleukin-1 beta (269 aa).

A propeptide spanning residues 1-117 (MATVPELNCE…DDDDNLLVCD (117 aa)) is cleaved from the precursor.

Belongs to the IL-1 family. As to quaternary structure, monomer. Interacts with MEFV. Interacts with integrins ITGAV:ITGBV and ITGA5:ITGB1; integrin-binding is required for IL1B signaling. Interacts with cargo receptor TMED10; the interaction is direct and is required for the secretion of IL1B mature form. Interacts with HSP90AB1; the interaction facilitates cargo translocation into the ERGIC. Interacts with HSP90B1; the interaction facilitates cargo translocation into the ERGIC. Expressed in activated macrophages (at protein level).

The protein localises to the cytoplasm. It localises to the cytosol. Its subcellular location is the secreted. The protein resides in the lysosome. It is found in the extracellular exosome. Functionally, potent pro-inflammatory cytokine. Initially discovered as the major endogenous pyrogen, induces prostaglandin synthesis, neutrophil influx and activation, T-cell activation and cytokine production, B-cell activation and antibody production, and fibroblast proliferation and collagen production. Promotes Th17 differentiation of T-cells. Synergizes with IL12/interleukin-12 to induce IFNG synthesis from T-helper 1 (Th1) cells. Plays a role in angiogenesis by inducing VEGF production synergistically with TNF and IL6. Involved in transduction of inflammation downstream of pyroptosis: its mature form is specifically released in the extracellular milieu by passing through the gasdermin-D (GSDMD) pore. This Mus musculus (Mouse) protein is Interleukin-1 beta (Il1b).